The sequence spans 395 residues: Beta-1,4-galactosyltransferase 3 (395 aa).

Residues 1 to 10 lie on the Cytoplasmic side of the membrane; that stretch reads MLRRLLERPC. Residues 11 to 31 form a helical; Signal-anchor for type II membrane protein membrane-spanning segment; the sequence is TLALLVGSQLAVMMYLSLGGF. Residues 32–395 are Lumenal-facing; the sequence is RSLSALFGRD…ANHTAPHGSH (364 aa). Asn57 carries N-linked (GlcNAc...) asparagine glycosylation. Cys79 and Cys121 are oxidised to a cystine. UDP-alpha-D-galactose-binding positions include 132-136, 171-173, 198-199, Tyr228, and Trp260; these read PHRAR, FNR, and VD. A disulfide bridge connects residues Cys192 and Cys211. A Mn(2+)-binding site is contributed by Asp199. N-acetyl-D-glucosamine is bound at residue 262-265; it reads GEDD. His293 contributes to the Mn(2+) binding site. 293–295 is a binding site for UDP-alpha-D-galactose; that stretch reads HRG. An N-acetyl-D-glucosamine-binding site is contributed by Arg305. Asn339 and Asn387 each carry an N-linked (GlcNAc...) asparagine glycan. Positions 341-395 are disordered; that stretch reads TADIGTDPRGPRAPSGPRYPPGSSQAFRQEMLQRRPPARPGPLPTANHTAPHGSH.

The protein belongs to the glycosyltransferase 7 family. Requires Mn(2+) as cofactor.

It localises to the golgi apparatus. The protein localises to the golgi stack membrane. The catalysed reaction is an N-acetyl-beta-D-glucosaminyl derivative + UDP-alpha-D-galactose = a beta-D-galactosyl-(1-&gt;4)-N-acetyl-beta-D-glucosaminyl derivative + UDP + H(+). It catalyses the reaction N-acetyl-D-glucosamine + UDP-alpha-D-galactose = beta-D-galactosyl-(1-&gt;4)-N-acetyl-D-glucosamine + UDP + H(+). The enzyme catalyses a beta-D-GlcNAc-(1-&gt;3)-beta-D-Gal-(1-&gt;4)-beta-D-Glc-(1&lt;-&gt;1)-Cer(d18:1(4E)) + UDP-alpha-D-galactose = a neolactoside nLc4Cer(d18:1(4E)) + UDP + H(+). It carries out the reaction a beta-D-glucosylceramide + UDP-alpha-D-galactose = a beta-D-galactosyl-(1-&gt;4)-beta-D-glucosyl-(1&lt;-&gt;1)-ceramide + UDP + H(+). The catalysed reaction is a neolactoside IV(3)-beta-GlcNAc-nLc4Cer + UDP-alpha-D-galactose = a neolactoside nLc6Cer + UDP + H(+). The protein operates within protein modification; protein glycosylation. In terms of biological role, responsible for the synthesis of complex-type N-linked oligosaccharides in many glycoproteins as well as the carbohydrate moieties of glycolipids. The chain is Beta-1,4-galactosyltransferase 3 (B4GALT3) from Cricetulus griseus (Chinese hamster).